The following is a 226-amino-acid chain: Lysosomal-associated transmembrane protein 4B (226 aa).

4 consecutive transmembrane segments (helical) span residues 26-46 (ILLGVWYLIINAVVLLILLSA), 72-92 (MCIAIAISLLMILICAMATYG), 100-120 (WIIPFFCYQIFDFALNTLVAI), and 153-173 (CLVLIILLFISIILTFKGYLI). Residues 205-221 (PPYDDATVNGAAKEPPP) are required for NEDD4 interaction.

This sequence belongs to the LAPTM4/LAPTM5 transporter family. In terms of assembly, homooligomer; upon reaching the lysosomes. Interacts with MCOLN1. Interacts with NEDD4; may play a role in the lysosomal sorting of LAPTM4B; enhances HGS association with NEDD4; mediates inhibition of EGFR degradation. Interacts with PIP5K1C; promotes SNX5 association with LAPTM4B; kinase activity of PIP5K1C is required; interaction is regulated by phosphatidylinositol 4,5-bisphosphate generated by PIP5K1C. Interacts with HGS; promotes HGS ubiquitination. Interacts with SNX5. Interacts with SLC3A2 and SLC7A5; recruits SLC3A2 and SLC7A5 to lysosomes to promote leucine uptake into these organelles and is required for mTORC1 activation. Interacts with LRRC32; decreases TGFB1 production in regulatory T cells. Interacts with BECN1; competes with EGFR for LAPTM4B binding; regulates EGFR activity. Interacts with EGFR; positively correlates with EGFR activation. Post-translationally, undergoes proteolytic cleavage following delivery to the lysosomes. Ubiquitinated by NEDD4.

The protein resides in the endomembrane system. It localises to the late endosome membrane. It is found in the cell membrane. Its subcellular location is the cell projection. The protein localises to the lysosome membrane. The protein resides in the endosome membrane. It localises to the endosome. It is found in the multivesicular body membrane. Its subcellular location is the multivesicular body lumen. Required for optimal lysosomal function. Blocks EGF-stimulated EGFR intraluminal sorting and degradation. Conversely by binding with the phosphatidylinositol 4,5-bisphosphate, regulates its PIP5K1C interaction, inhibits HGS ubiquitination and relieves LAPTM4B inhibition of EGFR degradation. Recruits SLC3A2 and SLC7A5 (the Leu transporter) to the lysosome, promoting entry of leucine and other essential amino acid (EAA) into the lysosome, stimulating activation of proton-transporting vacuolar (V)-ATPase protein pump (V-ATPase) and hence mTORC1 activation. Plays a role as negative regulator of TGFB1 production in regulatory T cells. Binds ceramide and facilitates its exit from late endosome in order to control cell death pathways. This is Lysosomal-associated transmembrane protein 4B from Macaca fascicularis (Crab-eating macaque).